Consider the following 352-residue polypeptide: UDP-3-O-acylglucosamine N-acyltransferase (352 aa).

His244 (proton acceptor) is an active-site residue.

Belongs to the transferase hexapeptide repeat family. LpxD subfamily. In terms of assembly, homotrimer.

The catalysed reaction is a UDP-3-O-[(3R)-3-hydroxyacyl]-alpha-D-glucosamine + a (3R)-hydroxyacyl-[ACP] = a UDP-2-N,3-O-bis[(3R)-3-hydroxyacyl]-alpha-D-glucosamine + holo-[ACP] + H(+). Its pathway is bacterial outer membrane biogenesis; LPS lipid A biosynthesis. Its function is as follows. Catalyzes the N-acylation of UDP-3-O-acylglucosamine using 3-hydroxyacyl-ACP as the acyl donor. Is involved in the biosynthesis of lipid A, a phosphorylated glycolipid that anchors the lipopolysaccharide to the outer membrane of the cell. This is UDP-3-O-acylglucosamine N-acyltransferase from Anaeromyxobacter sp. (strain Fw109-5).